The following is a 135-amino-acid chain: MIIGIGSDFSDARRIARSIERFGDRFLDRVFTPGERRKADQRKLRAETYAKRFAAKEACSKALGTGLSHGVFWRDMEVVNLPSGQPTLMLTGGAARRLAALVPDGYEPHIHLSLTDEGPLTAAYVIISAVPKTGV.

Residues D8 and E57 each contribute to the Mg(2+) site.

Belongs to the P-Pant transferase superfamily. AcpS family. Mg(2+) is required as a cofactor.

It localises to the cytoplasm. The enzyme catalyses apo-[ACP] + CoA = holo-[ACP] + adenosine 3',5'-bisphosphate + H(+). In terms of biological role, transfers the 4'-phosphopantetheine moiety from coenzyme A to a Ser of acyl-carrier-protein. The chain is Holo-[acyl-carrier-protein] synthase from Xanthobacter autotrophicus (strain ATCC BAA-1158 / Py2).